We begin with the raw amino-acid sequence, 1397 residues long: MFNDQSKTTSSVKGICATTDNNHGNLKKTNSTPFRKNYLLNGRTKLKLENFAYNASTEISSPKISEKKHSSLPIKRKNTFNESSTSFSPFTKAHKEITDDLKPDKSFTRKSDLNSQDMPVCFQETSKDLCRSSSTQHLLDHQTTDSTIIDMKPVSTNSKSDVFTLYTDETVLLRRCASDNKPLINNNLSSSNVSENQSRSFGSYDEVKNQGNNLHKVPSLVSIIRNARSSEQSRIAANSSCLLKGSDTEIDEDDFALEAEDLAALDSLERQYSQLPNSTVTASAKDIEKTAKVNHVGGDLQSYCSATKASDATINEEPVNLALDKACNSLPDINSDFIDDWDDSCDGCTPGELCEFSSEYTVLEVHEDFIFHEGNHFRQLKLILEANDILHQLFLRGDWTETSIFVGDSIRVEATFDKDNTAIVDNDKGLIIIHPKILMSATAVASSFPCLRKAVISDRVGIYGPPTKAMVTGNILHDFFQHALYRGIDALENVDINLETSIKTYISDIYFADLSLDEIREELDARLPLLKSIVERYLISKKNDNNNESIHISRLLDIEESIWSPRFGLKGNIDATVEVVLTEKPESSSTLTLPLELKTGRYVDNISHFAQSLLYTLLISDRYGINTNQALLCYLENSTIKNLVASNSQLRGLIMTRNSLAQHNFRRSLPEMISNRKICDHCSLVSECLFFQKMSDKGVANSNGLTESWNEWMREVKDEDLEFYKKWEKLLNQEERLLLLKRGDVLTFDTEELEAYGKTLYPLYITKEDIVCLEIDDRVFHYKFAFLNDNGYPRNFLHSGFSVGERVFISDEHGHWSLAKGHIVHIQDSCIEVRTRHRLHIPWLKMPNFDFKKNQVFFGNYEDSKLSFIGSNHTRYRIDKDEFSSGIASIRGTLMSSVLPDAPLIIRDMIIRLKPPKFCNSALIDPEFLKCLNEDQITALKKCHAAEHYSLILGMPGTGKTTTISSLIRSLLAKKKKILLTSFTHLAVDNILIKLKGCDSTIVRLGSPHKIHPLVKEFCLTEGTTFDDLASLKHFYEDPQIVACSSLGVYHSIFNKRKFDYCIIDEASQIPLPICLGPLQLAEKFVLVGDHYQLPPLVKNSRTSKDGLSLSLFKLLSEKHPEAVTTLRLQYRMNEDINSLSSELIYGGNLVCGSKTISQKKLILPKAHLSDGLPDSSSSLHWVNKLINPSHSVIFFNTDDILGVESKTNNILENHTEAFLIEQAVSSFLERGVKQSSIGIISIYKSQVELLSKNLKSFTEIEINTVDRYQGRDKDIILISFVRSNSKNLVGELLRDWHRLNVALSRAKVKCIMFGSLSTLSSSNIVSHLLKLLEKNKWIFTLNENDIATKFDENSSPIKDCSQVATTNNAKVIIRKNQRFFNSDNLCEKAILPQLEF.

Residues 1–32 form a disordered region; that stretch reads MFNDQSKTTSSVKGICATTDNNHGNLKKTNST. Residue serine 134 is modified to Phosphoserine. Serine 219 is subject to Phosphoserine; by CHEK2. The interval 390–808 is nuclease activity; it reads LHQLFLRGDW…SGFSVGERVF (419 aa). Residues cysteine 450, cysteine 679, cysteine 682, and cysteine 688 each contribute to the [4Fe-4S] cluster site. A helicase activity region spans residues 809–1397; it reads ISDEHGHWSL…EKAILPQLEF (589 aa). 954–961 is a binding site for ATP; that stretch reads GMPGTGKT.

This sequence belongs to the DNA2/NAM7 helicase family. As to quaternary structure, interacts with cdc1, cdc24 and rad2. [4Fe-4S] cluster serves as cofactor. Post-translationally, phosphorylated at Ser-219 by cds1/check2, leading to association with stalled replication forks.

Its subcellular location is the cytoplasm. It is found in the nucleus. The protein resides in the chromosome. The protein localises to the telomere. The catalysed reaction is ATP + H2O = ADP + phosphate + H(+). In terms of biological role, key enzyme involved in DNA replication and DNA repair. Involved in Okazaki fragments processing by cleaving long flaps that escape fen1: flaps that are longer than 27 nucleotides are coated by replication protein A complex (RPA), leading to recruit dna2 which cleaves the flap until it is too short to bind RPA and becomes a substrate for fen1. Is a target of the intra-S phase checkpoint, associating with stalled replication forks when phosphorylated at Ser-219 and preventing the stalled replication forks from reversing. Also involved in 5'-end resection of DNA during double-strand break (DSB) repair by mediating the cleavage of 5'-ssDNA. Also required for the production of G-rich single-strand overhangs at telomere ends and thus in telomere length maintenance. Possesses different enzymatic activities, such as single-stranded DNA (ssDNA)-dependent ATPase, 5'-3' helicase and endonuclease activities. While the ATPase and endonuclease activities are well-defined and play a key role in Okazaki fragments processing and DSB repair, the 5'-3' DNA helicase activity is atypical: it cannot load onto its tracking strand internally and has an absolute free 5'-end requirement. Helicase activity may promote the motion of dna2 on the flap, helping the nuclease function. This Schizosaccharomyces pombe (strain 972 / ATCC 24843) (Fission yeast) protein is DNA replication ATP-dependent helicase/nuclease dna2 (dna2).